Here is a 324-residue protein sequence, read N- to C-terminus: Beta-ketoacyl-[acyl-carrier-protein] synthase III (324 aa).

The active site involves Cys-112. The interval 181–202 (TDGSRGQNLTSGNNPLRSPFSD) is disordered. Residues 184–196 (SRGQNLTSGNNPL) show a composition bias toward polar residues. His-249 is an active-site residue. An ACP-binding region spans residues 250-254 (QANRR). Residue Asn-279 is part of the active site.

This sequence belongs to the thiolase-like superfamily. FabH family. Homodimer.

The protein localises to the cytoplasm. It carries out the reaction malonyl-[ACP] + acetyl-CoA + H(+) = 3-oxobutanoyl-[ACP] + CO2 + CoA. It functions in the pathway lipid metabolism; fatty acid biosynthesis. Its function is as follows. Catalyzes the condensation reaction of fatty acid synthesis by the addition to an acyl acceptor of two carbons from malonyl-ACP. Catalyzes the first condensation reaction which initiates fatty acid synthesis and may therefore play a role in governing the total rate of fatty acid production. Possesses both acetoacetyl-ACP synthase and acetyl transacylase activities. Its substrate specificity determines the biosynthesis of branched-chain and/or straight-chain of fatty acids. This is Beta-ketoacyl-[acyl-carrier-protein] synthase III from Streptococcus uberis (strain ATCC BAA-854 / 0140J).